A 514-amino-acid polypeptide reads, in one-letter code: 1,25-dihydroxyvitamin D(3) 24-hydroxylase, mitochondrial (514 aa).

The N-terminal 35 residues, 1 to 35 (MSCPIDKRRPLIAFLRRLRDLGQPPRSVTSKAHVK), are a transit peptide targeting the mitochondrion. Heme is bound at residue cysteine 462.

This sequence belongs to the cytochrome P450 family. Requires heme as cofactor.

It is found in the mitochondrion. The catalysed reaction is calcitriol + 2 reduced [adrenodoxin] + O2 + 2 H(+) = calcitetrol + 2 oxidized [adrenodoxin] + H2O. It carries out the reaction calcitetrol + 2 reduced [adrenodoxin] + O2 + 2 H(+) = (1S)-1,25-dihydroxy-24-oxocalciol + 2 oxidized [adrenodoxin] + 2 H2O. It catalyses the reaction (1S)-1,25-dihydroxy-24-oxocalciol + 2 reduced [adrenodoxin] + O2 + 2 H(+) = (1S)-1,23,25-trihydroxy-24-oxocalciol + 2 oxidized [adrenodoxin] + H2O. The enzyme catalyses (1S)-1,23-dihydroxy-24,25,26,27-tetranorcalciol + 2 reduced [adrenodoxin] + O2 + 2 H(+) = (1S)-1-hydroxy-23-oxo-24,25,26,27-tetranorcalciol + 2 oxidized [adrenodoxin] + 2 H2O. The catalysed reaction is (1S)-1-hydroxy-23-oxo-24,25,26,27-tetranorcalciol + 2 reduced [adrenodoxin] + O2 + H(+) = calcitroate + 2 oxidized [adrenodoxin] + H2O. It carries out the reaction calcidiol + 2 reduced [adrenodoxin] + O2 + 2 H(+) = secalciferol + 2 oxidized [adrenodoxin] + H2O. It catalyses the reaction secalciferol + 2 reduced [adrenodoxin] + O2 + 2 H(+) = 25-hydroxy-24-oxocalciol + 2 oxidized [adrenodoxin] + 2 H2O. The enzyme catalyses 25-hydroxy-24-oxocalciol + 2 reduced [adrenodoxin] + O2 + 2 H(+) = 23S,25-dihydroxy-24-oxocholecalciferol + 2 oxidized [adrenodoxin] + H2O. The catalysed reaction is 20S,23-dihydroxycholecalciferol + 2 reduced [adrenodoxin] + O2 + 2 H(+) = 20S,23,25-trihydroxycholecalciferol + 2 oxidized [adrenodoxin] + H2O. It carries out the reaction 20S,23-dihydroxycholecalciferol + 2 reduced [adrenodoxin] + O2 + 2 H(+) = 20S,23,24-trihydroxycholecalciferol + 2 oxidized [adrenodoxin] + H2O. It catalyses the reaction 20S-hydroxycholecalciferol + 2 reduced [adrenodoxin] + O2 + 2 H(+) = 20S,25-dihydroxycholecalciferol + 2 oxidized [adrenodoxin] + H2O. The enzyme catalyses 20S-hydroxycholecalciferol + 2 reduced [adrenodoxin] + O2 + 2 H(+) = 20S,24S-dihydroxycholecalciferol + 2 oxidized [adrenodoxin] + H2O. The catalysed reaction is 20S-hydroxycholecalciferol + 2 reduced [adrenodoxin] + O2 + 2 H(+) = 20S,24R-dihydroxycholecalciferol + 2 oxidized [adrenodoxin] + H2O. A cytochrome P450 monooxygenase with a key role in vitamin D catabolism and calcium homeostasis. Via C24-oxidation pathway, catalyzes the inactivation of both the vitamin D precursor calcidiol (25-hydroxyvitamin D(3)) and the active hormone calcitriol (1-alpha,25-dihydroxyvitamin D(3)). With initial hydroxylation at C-24 (via C24-oxidation pathway), performs a sequential 6-step oxidation of calcitriol leading to the formation of the biliary metabolite calcitroic acid. Hydroxylates at C-24 or C-25 other vitamin D active metabolites, such as CYP11A1-derived secosteroids 20S-hydroxycholecalciferol and 20S,23-dihydroxycholecalciferol. Mechanistically, uses molecular oxygen inserting one oxygen atom into a substrate, and reducing the second into a water molecule, with two electrons provided by NADPH via FDXR/adrenodoxin reductase and FDX1/adrenodoxin. This chain is 1,25-dihydroxyvitamin D(3) 24-hydroxylase, mitochondrial, found in Mus musculus (Mouse).